We begin with the raw amino-acid sequence, 79 residues long: uncharacterized protein (79 aa).

This is an uncharacterized protein from Sulfolobus islandicus filamentous virus (isolate Iceland/Hveragerdi) (SIFV).